The primary structure comprises 404 residues: MDPGGQDLLALDPGDQDLLGFLLEESGDLWAATEPDVKASLDLELSPSENSVQELSDWEVEDLLSSLLSPSVSRDVLGSSSSSILHDHNYSLPQEHVSIDLGECEMISCRGRRELTGLAGSTFPFADTESFEKEGFHVTPLPGEERAAEQEMSRLILTEEEKKLLEKEGLTLPSTLPLTKVEEQVLKRVRRKIRNKRAAQESRKKKKVYVVGLESRVLKYTAQNRELQNKVQRLEEQNLSLLDQLRKLQAMVIEIANKTSSGSTCVLVLVFSFCLLLVPAMYSSDARGSVPAEYVVLHRKLRALPSEDDHQPKPSALSSELPMDSTHQSLDSSEHMFLVSSNFSCVLYHAPQAEQPLHWPLWDLSSEMLFSDSNLLLQANLSESEGWQPNHSPSLVIFQGRYSG.

Residues 1 to 261 are Cytoplasmic-facing; the sequence is MDPGGQDLLA…VIEIANKTSS (261 aa). Short sequence motifs (LXXLL motif) lie at residues 19-23 and 64-68; these read LGFLL and LSSLL. Residues 87–90 carry the HCFC1-binding-motif (HBM) motif; that stretch reads DHNY. Residues 185–248 enclose the bZIP domain; sequence VLKRVRRKIR…LSLLDQLRKL (64 aa). Positions 187–225 are basic motif; sequence KRVRRKIRNKRAAQESRKKKKVYVVGLESRVLKYTAQNR. The segment at 227 to 248 is leucine-zipper; that stretch reads LQNKVQRLEEQNLSLLDQLRKL. Residues 262–282 form a helical; Signal-anchor for type II membrane protein membrane-spanning segment; the sequence is GSTCVLVLVFSFCLLLVPAMY. Residues 283-404 are Lumenal-facing; the sequence is SSDARGSVPA…LVIFQGRYSG (122 aa). The tract at residues 305–327 is disordered; sequence PSEDDHQPKPSALSSELPMDSTH. N-linked (GlcNAc...) asparagine glycosylation is found at Asn342 and Asn380.

It belongs to the bZIP family. ATF subfamily. As to quaternary structure, homodimer. Interacts with HCFC1; the interaction is required to stimulate CREB3 transcriptional activity. Interacts with CREBZF; the interaction occurs only in combination with HCFC1. Interacts (via central part and transmembrane region) with DCSTAMP (via C-terminus cytoplasmic domain). Interacts with OS9. Interacts (via leucine-zipper domain) with CREBRF (via leucine-zipper domain); the interaction occurs only after CREB3 activation and promotes CREB3 degradation. Interacts (via C-terminal domain) with CCR1. First proteolytically cleaved by site-1 protease (S1P) that generates membrane-associated N-terminus and a luminal C-terminus forms. The membrane-associated N-terminus form is further proteolytically processed probably by the site-2 protease (S2P) through a regulated intramembrane proteolysis (RIP), releasing the transcriptional active processed cyclic AMP-responsive element-binding protein 3 form, which is transported to the nucleus. The proteolytic cleavage is strongly induced during dendritic cell (DC) maturation and inhibited by DCSTAMP. That form is rapidly degraded. In terms of processing, N-glycosylated. Widely expressed.

The protein resides in the endoplasmic reticulum membrane. It is found in the golgi apparatus. Its subcellular location is the nucleus. It localises to the cytoplasm. Its function is as follows. Endoplasmic reticulum (ER)-bound sequence-specific transcription factor that directly binds DNA and activates transcription. Plays a role in the unfolded protein response (UPR), promoting cell survival versus ER stress-induced apoptotic cell death. Also involved in cell proliferation, migration and differentiation, tumor suppression and inflammatory gene expression. Acts as a positive regulator of LKN-1/CCL15-induced chemotaxis signaling of leukocyte cell migration. Associates with chromatin to the HERPUD1 promoter. Also induces transcriptional activation of chemokine receptors. Functions as a negative transcriptional regulator in ligand-induced transcriptional activation of the glucocorticoid receptor NR3C1 by recruiting and activating histone deacetylases (HDAC1, HDAC2 and HDAC6). Also decreases the acetylation level of histone H4. Does not promote the chemotactic activity of leukocyte cells. This is the transcriptionally active form that translocates to the nucleus and activates unfolded protein response (UPR) target genes during endoplasmic reticulum (ER) stress response. Binds the cAMP response element (CRE) (consensus: 5'-GTGACGT[AG][AG]-3') and C/EBP sequences present in many promoters to activate transcription of the genes. Binds to the unfolded protein response element (UPRE) consensus sequences sites. Binds DNA to the 5'-CCAC[GA]-3'half of ERSE II (5'-ATTGG-N-CCACG-3'). This is Cyclic AMP-responsive element-binding protein 3 (Creb3) from Mus musculus (Mouse).